The sequence spans 23 residues: ARCEQCPSYCCQSDSPPECDGCE.

3 cysteine pairs are disulfide-bonded: cysteine 3–cysteine 11, cysteine 6–cysteine 19, and cysteine 10–cysteine 22.

In terms of tissue distribution, expressed by the venom duct.

It is found in the secreted. Causes abnormal twist followed by immobility when injected into C.elegans. The sequence is that of Augerpeptide hhe7a from Hastula hectica (Sea snail).